A 90-amino-acid polypeptide reads, in one-letter code: uncharacterized protein (90 aa).

The N-terminal stretch at 1-18 (MKTLPVLVLSLTLLTVFS) is a signal peptide. The interval 28–50 (QAKQLLRSRRQDRPSKPGFPDEP) is disordered.

Its subcellular location is the secreted. This is an uncharacterized protein from Homo sapiens (Human).